The chain runs to 485 residues: Sulfated surface glycoprotein 185 (485 aa).

An N-terminal signal peptide occupies residues 1–20 (MSKLLLVALFGAIAVVATSA). N193 carries an N-linked (GlcNAc...) asparagine glycan. The disordered stretch occupies residues 212–317 (LSGPNVNPIG…PPVPPPPSPP (106 aa)). 2 stretches are compositionally biased toward pro residues: residues 221–234 (GPAP…PSPQ) and 241–317 (PPSP…PSPP). N-linked (GlcNAc...) asparagine glycosylation occurs at N347.

Polymer. In terms of processing, intersubunit cross-links are formed between saccharide chains rather than between polypeptide chains. Hydroxylated on proline residues in the Pro-rich central domain. Post-translationally, glycosylated; contains sulfate-substituted glycans.

In terms of biological role, the extracellular matrix (ECM) of Volvox contains insoluble fibrous layers that surround individual cells at a distance to form contiguous cellular compartments. SSG 185 is the monomeric precursor of this substructure (C3Z structure). This Volvox carteri (Green alga) protein is Sulfated surface glycoprotein 185.